The chain runs to 589 residues: Guanylate-binding protein 1 (589 aa).

Residues 1–309 are GTPase domain (Globular); it reads MASEIHMSEP…SAICSGELPC (309 aa). One can recognise a GB1/RHD3-type G domain in the interval 35–276; it reads TQPVVVVAIV…FTSYIFSYSG (242 aa). GTP-binding positions include 47-53, 67-69, and 97-101; these read YRTGKSY, LGS, and DTEGL. Phosphoserine is present on S156. C586 is modified (cysteine methyl ester). A lipid anchor (S-farnesyl cysteine) is attached at C586. Residue C586 is the site of S-geranylgeranyl cysteine; partial attachment. Residue T587 is modified to Phosphothreonine. The propeptide at 587–589 is removed in mature form; the sequence is TIL.

The protein belongs to the TRAFAC class dynamin-like GTPase superfamily. GB1/RHD3 GTPase family. GB1 subfamily. In terms of assembly, homodimer; homodimerization occurs upon GTP-binding and is required for the second hydrolysis step from GDP to GMP. Undergoes conformational changes and oligomerization upon GTP-binding and hydrolysis. Heterodimer with other family members, including GBP2, GBP3, GBP4 and GBP5. Dimerization regulates subcellular location to membranous structures. Interacts with SQSTM1. Interacts (when phosphorylated) with 14-3-3 protein sigma (SFN); leading to GBP1 retention in the cytosol and inactivation. Isoprenylation of mouse GBP1 is incomplete. It persistently exists in the cell as a mixture of C20-modified and (more predominantly) unmodified form. Isoprenylation is required for proper subcellular location. In terms of processing, phosphorylated at Ser-156 by PIM1 in absence of infection, inhibits GBP1: phosphorylation promotes interaction with 14-3-3 protein sigma (SFN), leading to GBP1 retention in the cytosol. Dephosphorylated in response to infection, liberating GBP1.

It is found in the cytoplasmic vesicle membrane. The protein localises to the golgi apparatus membrane. It localises to the cell membrane. The protein resides in the cytoplasm. Its subcellular location is the cytosol. It is found in the secreted. It carries out the reaction GTP + H2O = GDP + phosphate + H(+). It catalyses the reaction GDP + H2O = GMP + phosphate + H(+). Functionally, interferon (IFN)-inducible GTPase that plays important roles in innate immunity against a diverse range of bacterial, viral and protozoan pathogens. Hydrolyzes GTP to GMP in two consecutive cleavage reactions: GTP is first hydrolyzed to GDP and then to GMP in a processive manner. Following infection, recruited to the pathogen-containing vacuoles or vacuole-escaped bacteria and promotes both inflammasome assembly and autophagy. Acts as a positive regulator of inflammasome assembly by facilitating the detection of inflammasome ligands from pathogens. Involved in the lysis of pathogen-containing vacuoles, releasing pathogens into the cytosol. Following pathogen release in the cytosol, forms a protein coat in a GTPase-dependent manner that encapsulates pathogens and promotes the detection of ligands by pattern recognition receptors. Plays a key role in inflammasome assembly in response to infection by Gram-negative bacteria: following pathogen release in the cytosol, forms a protein coat that encapsulates Gram-negative bacteria and directly binds to lipopolysaccharide (LPS), disrupting the O-antigen barrier and unmasking lipid A that is that detected by the non-canonical inflammasome effector CASP4/CASP11. Also promotes recruitment of proteins that mediate bacterial cytolysis, leading to release double-stranded DNA (dsDNA) that activates the AIM2 inflammasome. Involved in autophagy by regulating bacteriolytic peptide generation via its interaction with ubiquitin-binding protein SQSTM1, which delivers monoubiquitinated proteins to autolysosomes for the generation of bacteriolytic peptides. Confers protection to several pathogens, including the bacterial pathogens L.monocytogenes and M.bovis BCG as well as the protozoan pathogen T.gondii. Exhibits antiviral activity against influenza virus. This is Guanylate-binding protein 1 (Gbp1) from Mus musculus (Mouse).